Reading from the N-terminus, the 2199-residue chain is MPLKTARGASKYQFRKFNGNYNGKSKSNGRTFAKSTEEVGFNDPMKIVYKKNEIDRMMGFDSYEGGQPREAWLLNVHPTVIESTKGNSTLSAVDFYFIQDDGDTFRCTIPYSPYFYIAAREGKEALVDDYLKKKFVGLIKSTTRIFKEDLQLKNHIVGYQKLYIKLVFDNLNDLQAVRKSLMSAVKANSSQQDAVDAYTNLSSENLNGIIENAFEDPLNHVLDIREYDVPYHSRTLIDLNIRVGQWYTVSYHEGHVQISLLASRIERAEPTIMAFDIETTKLPLKFPDSSFDKIMMISYMIDGQGFLITNREIISQNIEDFHYTPREEFEGPFIIFNEPDEVGLLHRFFKHIRSAKPSVIVTYNGDFFDWPFVDARAAFHGLNLTEETGFFRDAEDEYKSSYCSHMDAFRWVKRDSYLPQGSQGLKAVTVSKLGYNPIELDPELMTPYASEKPQVLAQYSVSDAVATYFLYMKYVHPFIFSLCNIIPLNPDEVLRKGTGTLCETLLTVEACTKNIILPNKHVDASQKFFDGHLLASETYVGGHVESLESGVFRSDLPTNFNMDPKVYEELILQLDKALDFSLTVENNVNVDEIENYEEVRDSILKKLSDLRDRPKRSEKPRIYHLDVASMYPNIMITNRLQPDSVKDESFCATCDLNVPNKTCDRRMVWAWRGEYYPAKKGEYHMIYSALQSERFPGPTPFSPFRSFQELSPSEQAAMVQKRIADYSRKVYHRLYDNTVIERETIICQKENSFYIDTVKSFRDRRYDFKGLQKKWVKQLAAIKEKGGLAEIEEAKKMVVLYDSLQLAHKVILNSFYGYVMRKGSRWYSIEMAGITCLTGATIIQMARQIVERAGRPLELDTDGIWCILPESFPENFEFKKKSGGKVFISYPCVMLNHLVHEKFTNHQYSALKDPEKLVYETTSENSIFFEVDGPYRAMILPASTEEGKNLKKRYAVFNFDGSLAELKGFEVKRRGELKLIKDFQSQIFKVFLKGDSLEECYQEVAYVADTWLEILFTKGSNLTDDELIELISENRSMSKALSEYGSQKSTSITTARRLADFLGDQMTKDKGLACRFIISASPKGRPVAERAVPVAIFFAEESVKRHFLRLWLKDNGLYDVDIRDIIDWDYYLKRLGSVVQKLISIPAALQRISNPVTRFPLPDWLQKRVAVLNSKYQQKKIDSIFSLAPTNPSTINNTKVTDIEDLGSVTHKDKRIVARVTKRKLLQQSGNSEAPVSFEVKPVSFMDGYSNWLKYAKKKWKYQKQVKLRRRHLIGFQSRQFTNVLQSSAEVMFENLWHILQIRETDVPGILHAWVIIRNRLTSIRFIVNRKFFVCFKDETLPNVEIEGCLIEKSNAILPHGSTSDKLFLLEIPEKSYLTEKVSISMIFAHPSVSGIYETRIEPIERLILEMGSRKRFNNSVPGALGKGFEFGFESKMFTDPSDNDVSYLDGVEMNYLYAFHFSISNRFVFSLFMPHLKKVEAIIYDKLPGSDMSFPSISKIYEELRSKFDNLIKESSIEYPDTLSCNVIFSGNERKAYKLIDEKLLQYFSTKTKNSLLIIESSLPHILKANVKQIEELPYIMIPRLESNIQSLSWKQHIATKMIQHFLAIGSWLFHRIQLSRFSDIPLCNFESDDIQYSIDVVYSRKLKEHNIILWWNKGPTPDLGGIEKDSILQIASPKDPLEVNNPGAYSNACVDISLSNLALCSILNSALINDIEGIGDMAALNDNYMTAINDDLEEKLGIHDNIGLTHSLPVLKALVKTWWNEAASGNNLADLIIQHLARWISSSKSYLYSPLLSSHVEVIMRKTFLQLLSEIKRLGAHIIHASANKILIKTSKLIVQNAVTYSNYLLKSIKTLPLFHFLDLNVTEYWDYLLWMDSVNYGGKMVAANFSATNEEPQTVVSWHIKSHLPPIIQPEFQSWIVEFIEEVYKQKLEKSNTKVGFVRVKNNNADEDSEIVGSGILKSKLIHPLKRKVAQVRRCFQELQLDENTREDLKFPKLPGSFLNYTDGALELVKSICAVFELSHDLNLEVRFLKKSLLSLLQIQEFSTQAVFRYPSRRLSLDQIPCKQCGVHQDFDLCLHEHLWPTRDDMGTLVFSDGWSCSSCNLVYDRWVFEETLVDNLYHQLTLYQLQDLICSKCKTVKQWSLKERCSCSGEWVLQLSPTKFREMLNVYQSVADFYEFSILQNSVQSILSVLN.

Residues Cys2069, Cys2072, Cys2104, and Cys2107 each contribute to the Zn(2+) site. The CysA-type zinc finger occupies Cys2069–Cys2107. [4Fe-4S] cluster contacts are provided by Cys2138, Cys2141, Cys2153, and Cys2155. A CysB motif motif is present at residues Cys2138 to Cys2155.

It belongs to the DNA polymerase type-B family. In terms of assembly, heterotetramer. Consists of 4 subunits: pol2, dpb2, dpb3 and dpb4. [4Fe-4S] cluster serves as cofactor.

It is found in the nucleus. The enzyme catalyses DNA(n) + a 2'-deoxyribonucleoside 5'-triphosphate = DNA(n+1) + diphosphate. In terms of biological role, DNA polymerase II participates in chromosomal DNA replication. The chain is DNA polymerase epsilon catalytic subunit A (pol2) from Schizosaccharomyces pombe (strain 972 / ATCC 24843) (Fission yeast).